The primary structure comprises 312 residues: DNA-directed RNA polymerase subunit alpha (312 aa).

Residues 1 to 229 are alpha N-terminal domain (alpha-NTD); it reads MLQYQIDRID…ELFQPLATVS (229 aa). An alpha C-terminal domain (alpha-CTD) region spans residues 239–312; it reads EPAAEAQIPL…ISIPQSRTSA (74 aa).

This sequence belongs to the RNA polymerase alpha chain family. In terms of assembly, in cyanobacteria the RNAP catalytic core is composed of 2 alpha, 1 beta, 1 beta', 1 gamma and 1 omega subunit. When a sigma factor is associated with the core the holoenzyme is formed, which can initiate transcription.

The catalysed reaction is RNA(n) + a ribonucleoside 5'-triphosphate = RNA(n+1) + diphosphate. In terms of biological role, DNA-dependent RNA polymerase catalyzes the transcription of DNA into RNA using the four ribonucleoside triphosphates as substrates. The chain is DNA-directed RNA polymerase subunit alpha from Prochlorococcus marinus (strain NATL1A).